Here is a 116-residue protein sequence, read N- to C-terminus: Large ribosomal subunit protein bL19 (116 aa).

Belongs to the bacterial ribosomal protein bL19 family.

Functionally, this protein is located at the 30S-50S ribosomal subunit interface and may play a role in the structure and function of the aminoacyl-tRNA binding site. The protein is Large ribosomal subunit protein bL19 of Staphylococcus epidermidis (strain ATCC 35984 / DSM 28319 / BCRC 17069 / CCUG 31568 / BM 3577 / RP62A).